The following is a 319-amino-acid chain: ATP-dependent 6-phosphofructokinase (319 aa).

G11 contacts ATP. ADP is bound at residue 21 to 25 (RAVVR). ATP is bound by residues 72–73 (RY) and 102–105 (GDGS). Position 103 (D103) interacts with Mg(2+). Residue 125–127 (TID) coordinates substrate. D127 acts as the Proton acceptor in catalysis. R154 provides a ligand contact to ADP. Substrate-binding positions include R162 and 169–171 (MGR). Residues 185–187 (GAE), R211, and 213–215 (KKH) each bind ADP. Substrate contacts are provided by residues E222, R243, and 249 to 252 (HVQR).

This sequence belongs to the phosphofructokinase type A (PFKA) family. ATP-dependent PFK group I subfamily. Prokaryotic clade 'B1' sub-subfamily. As to quaternary structure, homotetramer. Mg(2+) serves as cofactor.

The protein localises to the cytoplasm. It catalyses the reaction beta-D-fructose 6-phosphate + ATP = beta-D-fructose 1,6-bisphosphate + ADP + H(+). The protein operates within carbohydrate degradation; glycolysis; D-glyceraldehyde 3-phosphate and glycerone phosphate from D-glucose: step 3/4. Its activity is regulated as follows. Allosterically activated by ADP and other diphosphonucleosides, and allosterically inhibited by phosphoenolpyruvate. Its function is as follows. Catalyzes the phosphorylation of D-fructose 6-phosphate to fructose 1,6-bisphosphate by ATP, the first committing step of glycolysis. This Listeria welshimeri serovar 6b (strain ATCC 35897 / DSM 20650 / CCUG 15529 / CIP 8149 / NCTC 11857 / SLCC 5334 / V8) protein is ATP-dependent 6-phosphofructokinase.